Reading from the N-terminus, the 224-residue chain is UPF0758 protein XF_0148 (224 aa).

The 123-residue stretch at 102–224 (SIHDPISAGR…PVSFAEHGWL (123 aa)) folds into the MPN domain. Zn(2+) contacts are provided by histidine 173, histidine 175, and aspartate 186. The JAMM motif signature appears at 173–186 (HNHPSGNREPSPAD).

This sequence belongs to the UPF0758 family.

The sequence is that of UPF0758 protein XF_0148 from Xylella fastidiosa (strain 9a5c).